The following is a 143-amino-acid chain: Hemoglobin subunit alpha-1 (143 aa).

Position 2 is an N-acetylserine (Ser2). The region spanning 2 to 143 (SLSSKDKATV…LALALAEKYR (142 aa)) is the Globin domain. Residue His60 coordinates O2. His89 is a binding site for heme b.

It belongs to the globin family. Hb 1 is a heterotetramer of two alpha-1 and two beta-1 chains. In terms of tissue distribution, red blood cells.

Functionally, involved in oxygen transport from gills to the various peripheral tissues. This chain is Hemoglobin subunit alpha-1 (hba1), found in Arctogadus glacialis (Arctic cod).